We begin with the raw amino-acid sequence, 419 residues long: Glutamyl-tRNA reductase (419 aa).

Substrate is bound by residues 49-52 (TCNR), S107, 112-114 (EPQ), and Q118. Residue C50 is the Nucleophile of the active site. Position 187–192 (187–192 (GAGETI)) interacts with NADP(+).

The protein belongs to the glutamyl-tRNA reductase family. Homodimer.

It carries out the reaction (S)-4-amino-5-oxopentanoate + tRNA(Glu) + NADP(+) = L-glutamyl-tRNA(Glu) + NADPH + H(+). It participates in porphyrin-containing compound metabolism; protoporphyrin-IX biosynthesis; 5-aminolevulinate from L-glutamyl-tRNA(Glu): step 1/2. In terms of biological role, catalyzes the NADPH-dependent reduction of glutamyl-tRNA(Glu) to glutamate 1-semialdehyde (GSA). This chain is Glutamyl-tRNA reductase, found in Vibrio atlanticus (strain LGP32) (Vibrio splendidus (strain Mel32)).